A 210-amino-acid chain; its full sequence is MNREALRLYLVTNRYQDSVESFLAKVETACRSGVTIVQLREKNLTTNQYYQLAKQVKEITDAYQVPLIIDDRLDVCLAVDAAGLHIGDDELPVSVARKVLGPEKILGVTAKTVKRALEAEKSGADYLGTGAIFPTTTKENAPITLISTLKTICQTVAIPVVAIGGLTSENIDQLMGTGIAGVAVVRDLMQAEDIEAKTQAFLKKLHNILS.

Residues 38–42 (QLREK) and Asp-70 each bind 4-amino-2-methyl-5-(diphosphooxymethyl)pyrimidine. 2 residues coordinate Mg(2+): Asp-71 and Glu-90. A 4-amino-2-methyl-5-(diphosphooxymethyl)pyrimidine-binding site is contributed by Thr-109. 135–137 (TTT) is a binding site for 2-[(2R,5Z)-2-carboxy-4-methylthiazol-5(2H)-ylidene]ethyl phosphate. Lys-138 is a 4-amino-2-methyl-5-(diphosphooxymethyl)pyrimidine binding site. Position 165 (Gly-165) interacts with 2-[(2R,5Z)-2-carboxy-4-methylthiazol-5(2H)-ylidene]ethyl phosphate.

Belongs to the thiamine-phosphate synthase family. It depends on Mg(2+) as a cofactor.

The catalysed reaction is 2-[(2R,5Z)-2-carboxy-4-methylthiazol-5(2H)-ylidene]ethyl phosphate + 4-amino-2-methyl-5-(diphosphooxymethyl)pyrimidine + 2 H(+) = thiamine phosphate + CO2 + diphosphate. It carries out the reaction 2-(2-carboxy-4-methylthiazol-5-yl)ethyl phosphate + 4-amino-2-methyl-5-(diphosphooxymethyl)pyrimidine + 2 H(+) = thiamine phosphate + CO2 + diphosphate. It catalyses the reaction 4-methyl-5-(2-phosphooxyethyl)-thiazole + 4-amino-2-methyl-5-(diphosphooxymethyl)pyrimidine + H(+) = thiamine phosphate + diphosphate. Its pathway is cofactor biosynthesis; thiamine diphosphate biosynthesis; thiamine phosphate from 4-amino-2-methyl-5-diphosphomethylpyrimidine and 4-methyl-5-(2-phosphoethyl)-thiazole: step 1/1. Its function is as follows. Condenses 4-methyl-5-(beta-hydroxyethyl)thiazole monophosphate (THZ-P) and 2-methyl-4-amino-5-hydroxymethyl pyrimidine pyrophosphate (HMP-PP) to form thiamine monophosphate (TMP). The sequence is that of Thiamine-phosphate synthase 2 from Streptococcus pneumoniae serotype 4 (strain ATCC BAA-334 / TIGR4).